Consider the following 517-residue polypeptide: Sugar transport protein MST1 (517 aa).

At 1-25 the chain is on the cytoplasmic side; the sequence is MAGGVIVANDGDGSAVDHGGRLTFS. Residues 26–46 form a helical membrane-spanning segment; that stretch reads VVITCLVAASGGLIFGYDVGI. The Extracellular segment spans residues 47-83; it reads SGGVSTMEPFLRRFFPGVVRRMAEARPGNEYCVYDSQ. Residues 84 to 104 form a helical membrane-spanning segment; sequence ALTAFTSSLYVAGLVASLVAS. Topologically, residues 105-120 are cytoplasmic; sequence RVTRAMGRQAVMVMGG. A helical membrane pass occupies residues 121–141; that stretch reads ALFFAGGAVTGFAVNIAMLIV. Over 142 to 143 the chain is Extracellular; sequence GR. A helical transmembrane segment spans residues 144 to 164; the sequence is MLLGFGVGFTNQAAPLFLAEM. The Cytoplasmic segment spans residues 165-170; that stretch reads APTRWR. Residues 171 to 191 form a helical membrane-spanning segment; that stretch reads GSLTAGFQFFLAVGVVIATVT. Residues 192 to 203 lie on the Extracellular side of the membrane; that stretch reads NYFASRVPWGWR. A helical membrane pass occupies residues 204-224; sequence LSLGLAGAPAVVIFLGALFLT. Residues 225–288 lie on the Cytoplasmic side of the membrane; sequence DTPSSLVMRG…AARREYRPYL (64 aa). A helical transmembrane segment spans residues 289–309; the sequence is VFAVAMPMFFQLTGVIVISFF. Residues 310–325 lie on the Extracellular side of the membrane; it reads SPLVFRTVGFGSNAAL. Residues 326–346 form a helical membrane-spanning segment; that stretch reads MGNVILGAVNLVCLMLSTLVI. Over 347–352 the chain is Cytoplasmic; it reads DRYGRK. Residues 353–373 traverse the membrane as a helical segment; it reads VLFMVGGAIMIIAQVGVAWIM. Residues 374–389 lie on the Extracellular side of the membrane; it reads GAQVGKNGSEAMARPY. The helical transmembrane segment at 390–410 threads the bilayer; that stretch reads AVAVVAFTCLHTAGFGWSWGP. Residues 411-430 lie on the Cytoplasmic side of the membrane; sequence LGWVIPGEIFPVDIRSAGQA. Residues 431-451 form a helical membrane-spanning segment; it reads MNVSIGLGLTFVQTQSFLAML. Residues 452–456 are Extracellular-facing; the sequence is CRFRY. Residues 457-477 form a helical membrane-spanning segment; it reads GTFAYYAAWVAVMTVFIAVFL. Residues 478 to 517 are Cytoplasmic-facing; it reads PETKGVPLESMATVWARHWYWKRFAREQPKTSADEPTGTY.

The protein belongs to the major facilitator superfamily. Sugar transporter (TC 2.A.1.1) family.

It is found in the membrane. In terms of biological role, mediates active uptake of hexoses by sugar:proton symport. The chain is Sugar transport protein MST1 from Oryza sativa subsp. japonica (Rice).